The sequence spans 454 residues: Caspase-9 (454 aa).

The CARD domain maps to 1 to 92; it reads MDEADRQLLR…GTLASLLQSG (92 aa). Phosphothreonine; by MAPK1 is present on T163. A Phosphotyrosine; by ABL1 modification is found at Y191. Catalysis depends on residues H275 and C325. Phosphoserine occurs at positions 340 and 348. A propeptide spanning residues 354 to 367 is cleaved from the precursor; it reads AVPYQEGPRPLDQL.

The protein belongs to the peptidase C14A family. In terms of assembly, heterotetramer that consists of two anti-parallel arranged heterodimers, each one formed by a 35 kDa (p35) and a 10 kDa (p10) subunit. Caspase-9 and APAF1 bind to each other via their respective NH2-terminal CED-3 homologous domains in the presence of cytochrome C and ATP. Interacts (inactive form) with EFHD2. Interacts with HAX1. Interacts with BIRC2/c-IAP1, XIAP/BIRC4, BIRC5/survivin, BIRC6/bruce and BIRC7/livin. Interacts with ABL1 (via SH3 domain); the interaction is direct and increased in the response of cells to genotoxic stress and ABL1/c-Abl activation. Interacts with BCL2L10. Post-translationally, cleavages at Asp-353 by granzyme B and at Asp-368 by caspase-3 generate the two active subunits. Caspase-8 and -10 can also be involved in these processing events. In terms of processing, phosphorylated at Thr-163 by MAPK1/ERK2. Phosphorylation at Thr-163 is sufficient to block caspase-9 processing and subsequent caspase-3 activation. Phosphorylation on Tyr-191 by ABL1/c-Abl; occurs in the response of cells to DNA damage. Ubiquitinated by BIRC6; this activity is inhibited by DIABLO/SMAC.

It carries out the reaction Strict requirement for an Asp residue at position P1 and with a marked preference for His at position P2. It has a preferred cleavage sequence of Leu-Gly-His-Asp-|-Xaa.. With respect to regulation, inhibited by BIRC6; following inhibition of BIRC6-caspase binding by DIABLO/SMAC, BIRC6 is subjected to caspase cleavage, leading to an increase in active caspases. In terms of biological role, involved in the activation cascade of caspases responsible for apoptosis execution. Binding of caspase-9 to Apaf-1 leads to activation of the protease which then cleaves and activates effector caspases caspase-3 (CASP3) or caspase-7 (CASP7). Promotes DNA damage-induced apoptosis in a ABL1/c-Abl-dependent manner. Proteolytically cleaves poly(ADP-ribose) polymerase (PARP). Cleaves BIRC6 following inhibition of BIRC6-caspase binding by DIABLO/SMAC. This Mus musculus (Mouse) protein is Caspase-9 (Casp9).